The following is a 558-amino-acid chain: MAALTQNPQFKKLQTWYHEHRSDLNLRRLFEGDKDRFNHFSLNLNTNHGRILLDYSKNLVTEAVMQMLVDLAKSRGVEAARERMFNGEKINFTEDRAVLHVALRNRSNTPILVDGKDVMPEVNRVLEKMKSFCKRVRSGEWKGYSGKSITDVINIGIGGSDLGPLMVTEALKPYSAEGPRVWFVSNIDGTHIAKTLATLNPESSLFIIASKTFTTQETITNAETAKEWFLQSAKDPSAVAKHFVALSTNTTKVKEFGIDPQNMFEFWDWVGGRYSLWSAIGLSIALHVGFDNFEQLLSGAHWMDQHFRTTPLEKNAPVLLALLGIWYINFFGCETHAMLPYDQYLHRFAAYFQQGDMESNGKYITKSGTRVDHQTGPIVWGEPGTNGQHAFYQLIHQGTKMIPCDFLIPVQTQHPIRKGLHHKILLANFLAQTEALMKGKSTEEARKELQAAGKSPEDFEKLLPHKVFEGNRPTNSIVFTKLTPFILGALIAMYEHKIFVQGVIWDINSFDQWGVELGKQLAKKIEPELDGSSPVTSHDSSTNGLINFIKQEREARSQ.

Residue Ala2 is modified to N-acetylalanine. Lys12 carries the post-translational modification N6-acetyllysine. Lys34 carries the post-translational modification N6-(2-hydroxyisobutyryl)lysine. The residue at position 107 (Ser107) is a Phosphoserine. Phosphothreonine is present on Thr109. Position 142 is an N6-acetyllysine (Lys142). Residue 159 to 160 (GS) participates in D-glucose 6-phosphate binding. Ser185 is subject to Phosphoserine; by CK2. 210-215 (SKTFTT) contacts D-glucose 6-phosphate. At Thr250 the chain carries Phosphothreonine. D-glucose 6-phosphate is bound by residues Gln354, Glu358, and His389. Residue Glu358 is the Proton donor of the active site. His389 is an active-site residue. At Lys454 the chain carries N6-acetyllysine; alternate. N6-malonyllysine; alternate is present on Lys454. Lys454 is modified (N6-succinyllysine; alternate). At Ser455 the chain carries Phosphoserine. Residue Lys519 coordinates D-glucose 6-phosphate. Residue Lys519 is part of the active site.

Belongs to the GPI family. As to quaternary structure, homodimer in the catalytically active form, monomer in the secreted form. In terms of processing, phosphorylation at Ser-185 by CK2 has been shown to decrease enzymatic activity and may contribute to secretion by a non-classical secretory pathway. ISGylated.

It localises to the cytoplasm. The protein resides in the secreted. It carries out the reaction alpha-D-glucose 6-phosphate = beta-D-fructose 6-phosphate. It participates in carbohydrate degradation; glycolysis; D-glyceraldehyde 3-phosphate and glycerone phosphate from D-glucose: step 2/4. In the cytoplasm, catalyzes the conversion of glucose-6-phosphate to fructose-6-phosphate, the second step in glycolysis, and the reverse reaction during gluconeogenesis. Besides it's role as a glycolytic enzyme, also acts as a secreted cytokine: acts as an angiogenic factor (AMF) that stimulates endothelial cell motility. Acts as a neurotrophic factor, neuroleukin, for spinal and sensory neurons. It is secreted by lectin-stimulated T-cells and induces immunoglobulin secretion. The sequence is that of Glucose-6-phosphate isomerase from Sus scrofa (Pig).